The following is a 1244-amino-acid chain: MLIKEYHILLPMSLDEYQVAQLYMIQKKSREESSGEGSGVEILANRPYTDGPGGSGQYTHKVYHVGSHIPGWFRALLPKAALQVEEESWNAYPYTRTRYTCPFVEKFSIEIETYYLPDGGQQPNVFNLSGAERRQRILDTIDIVRDAVAPGEYKAEEDPRLYHSVKTGRGPLSDDWARTAAQTGPLMCAYKLCKVEFRYWGMQAKIEQFIHDVGLRRVMLRAHRQAWCWQDEWTELSMADIRALEEETARMLAQRMAKCNTGSEGSEAQPPGKPSTEARSAASNTGTPDGPEAPPGPDASPDASFGKQWSSSSRSSYSSQHGGAVSPQSLSEWRMQNIARDSENSSEEEFFDAHEGFSDSEEVFPKEMTKWNSNDFIDAFASPVEAEGTPEPGAEAAKGIEDGAQAPRDSEGLDGAGELGAEACAVHALFLILHSGNILDSGPGDANSKQADVQTLSSAFEAVTRIHFPEALGHVALRLVPCPPICAAAYALVSNLSPYSHDGDSLSRSQDHIPLAALPLLATSSSRYQGAVATVIARTNQAYSAFLRSPEGAGFCGQVALIGDGVGGILGFDALCHSANAGTGSRGSSRRGSMNNELLSPEFGPVRDPLADGVEGLGRGSPEPSALPPQRIPSDMASPEPEGSQNSLQAAPATTSSWEPRRASTAFCPPAASSEAPDGPSSTARLDFKVSGFFLFGSPLGLVLALRKTVMPALEAAQMRPACEQIYNLFHAADPCASRLEPLLAPKFQAIAPLTVPRYQKFPLGDGSSLLLADTLQTHSSLFLEELEMLVPSTPTSTSGAFWKGSELATDPPAQPAAPSTTSEVVKILERWWGTKRIDYSLYCPEALTAFPTVTLPHLFHASYWESADVVAFILRQVIEKERPQLAECEEPSIYSPAFPREKWQRKRTQVKIRNVTSNHRASDTVVCEGRPQVLSGRFMYGPLDVVTLTGEKVDVYIMTQPLSGKWIHFGTEVTNSSGRLTFPVPPERALGIGVYPVRMVVRGDHTYAECCLTVVARGTEAVVFSIDGSFTASVSIMGSDPKVRAGAVDVVRHWQDSGYLIVYVTGRPDMQKHRVVAWLSQHNFPHGVVSFCDGLTHDPLRQKAMFLQSLVQEVELNIVAGYGSPKDVAVYAALGLSPSQTYIVGRAVRKLQAQCQFLSDGYVAHLGQLEAGSHSHASSGPPRAALGKSSYGVAAPVDFLRKQSQLLRSRGPSQAEREGPGTPPTTLARGKARSISLKLDSEE.

The residue at position 59 (Thr-59) is a Phosphothreonine. Disordered regions lie at residues 258–331 (KCNT…QSLS) and 339–358 (ARDSENSSEEEFFDAHEGFS). Thr-287 carries the phosphothreonine; by CDK1 modification. Over residues 299–319 (ASPDASFGKQWSSSSRSSYSS) the composition is skewed to low complexity. A phosphoserine mark is found at Ser-300, Ser-304, Ser-319, Ser-326, Ser-329, Ser-342, Ser-345, Ser-346, and Ser-373. The residue at position 382 (Ser-382) is a Phosphoserine; by CDK1. A disordered region spans residues 581-682 (AGTGSRGSSR…SSEAPDGPSS (102 aa)). Phosphoserine is present on residues Ser-593, Ser-600, and Ser-621. Residues 643–658 (GSQNSLQAAPATTSSW) are compositionally biased toward polar residues. A DDHD domain is found at 686–880 (LDFKVSGFFL…VAFILRQVIE (195 aa)). Ser-896 bears the Phosphoserine mark. The tract at residues 1206-1244 (QLLRSRGPSQAEREGPGTPPTTLARGKARSISLKLDSEE) is disordered. Omega-N-methylarginine occurs at positions 1211 and 1218. Ser-1237 carries the post-translational modification Phosphoserine.

The protein belongs to the PtdIns transfer protein family. PI transfer class IIA subfamily. In terms of assembly, interacts with PIK4CA. Interacts with PTK2B via its C-terminus. Interacts with RHOA. Has higher affinity for the inactive, GDP-bound form of RHOA. The CDK1-phosphorylated form interacts with PLK1. Interacts with VAPB. In terms of processing, phosphorylated on multiple sites by CDK1 at the onset of mitosis. Phosphorylation facilitates dissociation from the Golgi complex and is required for interaction with PLK1. Post-translationally, phosphorylated on threonine residues upon treatment with oleic acid. Phosphorylated on tyrosine residues by PTK2B. In terms of tissue distribution, ubiquitous.

Its subcellular location is the cytoplasm. The protein resides in the golgi apparatus. The protein localises to the golgi stack membrane. It is found in the endoplasmic reticulum membrane. It localises to the lipid droplet. Its subcellular location is the cleavage furrow. The protein resides in the midbody. The enzyme catalyses a 1,2-diacyl-sn-glycero-3-phospho-(1D-myo-inositol)(in) = a 1,2-diacyl-sn-glycero-3-phospho-(1D-myo-inositol)(out). In terms of biological role, catalyzes the transfer of phosphatidylinositol (PI) between membranes. Binds PI, phosphatidylcholine (PC) and phosphatidic acid (PA) with the binding affinity order of PI &gt; PA &gt; PC. Regulates RHOA activity, and plays a role in cytoskeleton remodeling. Necessary for normal completion of cytokinesis. Plays a role in maintaining normal diacylglycerol levels in the Golgi apparatus. Necessary for maintaining the normal structure of the endoplasmic reticulum and the Golgi apparatus. Required for protein export from the endoplasmic reticulum and the Golgi. Binds calcium ions. The polypeptide is Membrane-associated phosphatidylinositol transfer protein 1 (PITPNM1) (Homo sapiens (Human)).